We begin with the raw amino-acid sequence, 356 residues long: Phosphate acyltransferase (356 aa).

It belongs to the PlsX family. In terms of assembly, homodimer. Probably interacts with PlsY.

Its subcellular location is the cytoplasm. The catalysed reaction is a fatty acyl-[ACP] + phosphate = an acyl phosphate + holo-[ACP]. Its pathway is lipid metabolism; phospholipid metabolism. In terms of biological role, catalyzes the reversible formation of acyl-phosphate (acyl-PO(4)) from acyl-[acyl-carrier-protein] (acyl-ACP). This enzyme utilizes acyl-ACP as fatty acyl donor, but not acyl-CoA. The polypeptide is Phosphate acyltransferase (Xanthobacter autotrophicus (strain ATCC BAA-1158 / Py2)).